We begin with the raw amino-acid sequence, 436 residues long: MFDSTLNPLWQRYILAVQEEVKPALGCTEPISLALAAAVAAAELEGPVERVEAWVSPNLMKNGLGVTVPGTGMVGLPIAAALGALGGNANAGLEVLKDATAQAIADAKALLAAGKVSVKIQEPCNEILFSRAKVWNGEKWACVTIVGGHTNIVHIETHDGVVFTQQACVAEGEQESPLTVLSRTTLAEILKFVNEVPFAAIRFILDSAKLNCALSQEGLSGKWGLHIGATLEKQCARGLLAKDLSSSIVIRTSAASDARMGGATLPAMSNSGSGNQGITATMPVVVVAEHFGADDERLARALMLSHLSAIYIHNQLPRLSALCAATTAAMGAAAGMAWLVDGRYETISMAISSMIGDVSGMICDGASNSCAMKVSTSASAAWKAVLMALDDTAVTGNEGIVAHDVEQSIANLCALASHSMQQTDRQIIEIMASKAR.

The protein belongs to the UPF0597 family.

This Escherichia coli O7:K1 (strain IAI39 / ExPEC) protein is UPF0597 protein YhaM.